The primary structure comprises 543 residues: ADIPOR-like receptor IZH3 (543 aa).

Residues 1–259 are Lumenal-facing; that stretch reads MMDSSSKSLT…NWYGWHNETS (259 aa). N45, N123, N153, and N256 each carry an N-linked (GlcNAc...) asparagine glycan. The chain crosses the membrane as a helical span at residues 260-280; sequence NIWSHLLGAIYIIYLAIYDFP. Residues 281-295 are Cytoplasmic-facing; it reads QSEVWRNSQVPPQAR. Residues 296-316 traverse the membrane as a helical segment; the sequence is WIVFMFLAAALKCMLSSVFWH. At 317 to 330 the chain is on the lumenal side; the sequence is TFNGTSFLKLRSKF. N319 carries N-linked (GlcNAc...) asparagine glycosylation. The chain crosses the membrane as a helical span at residues 331–353; it reads ACVDYSGITILITASILTTEFVT. The Cytoplasmic segment spans residues 354–357; that stretch reads MYSC. A helical membrane pass occupies residues 358-378; the sequence is YWAMYTYMSISLALGVFGVFM. The Lumenal portion of the chain corresponds to 379–395; that stretch reads NWSPRFDRPEARPLRIR. Residues 396 to 416 form a helical membrane-spanning segment; it reads FFILLATMGVLSFLHLIFLTD. Residues 417–425 are Cytoplasmic-facing; that stretch reads LHYAATLFS. The helical transmembrane segment at 426–446 threads the bilayer; that stretch reads PVTYKSVVWYLVGVVFYGSFI. Residues 447–505 are Lumenal-facing; the sequence is PERFRSDVQVDKTIPTNYELSTDLEIITKQREIHFREVPTAHSKCSSCPSHAKSFKSLW. The chain crosses the membrane as a helical span at residues 506-526; sequence WVDYFGCSHTFWHFFVVLGVI. Topologically, residues 527 to 543 are cytoplasmic; sequence GHYRAILDMFAKRWILS.

It belongs to the ADIPOR family.

It localises to the endoplasmic reticulum membrane. Its function is as follows. ADIPOR-like receptor involved in zinc metabolism either by altering membrane sterol content or by directly altering cellular zinc levels. In Saccharomyces cerevisiae (strain ATCC 204508 / S288c) (Baker's yeast), this protein is ADIPOR-like receptor IZH3 (IZH3).